Consider the following 164-residue polypeptide: Transcription elongation factor GreA (164 aa).

Residues 50 to 76 (YHAAREEQGQQEARIRQLQDLLSNAKV) are a coiled coil.

The protein belongs to the GreA/GreB family.

In terms of biological role, necessary for efficient RNA polymerase transcription elongation past template-encoded arresting sites. The arresting sites in DNA have the property of trapping a certain fraction of elongating RNA polymerases that pass through, resulting in locked ternary complexes. Cleavage of the nascent transcript by cleavage factors such as GreA or GreB allows the resumption of elongation from the new 3'terminus. GreA releases sequences of 2 to 3 nucleotides. The protein is Transcription elongation factor GreA of Mycobacterium bovis (strain ATCC BAA-935 / AF2122/97).